Reading from the N-terminus, the 61-residue chain is Small ribosomal subunit protein uS14 (61 aa).

Residues Cys-24, Cys-27, Cys-40, and Cys-43 each coordinate Zn(2+).

This sequence belongs to the universal ribosomal protein uS14 family. Zinc-binding uS14 subfamily. As to quaternary structure, part of the 30S ribosomal subunit. Contacts proteins S3 and S10. The cofactor is Zn(2+).

Functionally, binds 16S rRNA, required for the assembly of 30S particles and may also be responsible for determining the conformation of the 16S rRNA at the A site. This is Small ribosomal subunit protein uS14 from Clostridium botulinum (strain 657 / Type Ba4).